The sequence spans 782 residues: E3 UFM1-protein ligase 1 homolog (782 aa).

The disordered stretch occupies residues 405 to 478 (VSTQELEDDG…TRGGGGASKK (74 aa)).

The protein belongs to the UFL1 family.

Functionally, E3 UFM1-protein ligase that mediates ufmylation of target proteins. This chain is E3 UFM1-protein ligase 1 homolog, found in Drosophila simulans (Fruit fly).